The following is a 270-amino-acid chain: tRNA pseudouridine synthase A (270 aa).

The Nucleophile role is filled by D60. Positions 107-111 are RNA binding; it reads FHARF. Residue Y118 coordinates substrate. The segment at 168–172 is interaction with tRNA; sequence QCQSR.

This sequence belongs to the tRNA pseudouridine synthase TruA family. In terms of assembly, homodimer.

It carries out the reaction uridine(38/39/40) in tRNA = pseudouridine(38/39/40) in tRNA. Functionally, formation of pseudouridine at positions 38, 39 and 40 in the anticodon stem and loop of transfer RNAs. The polypeptide is tRNA pseudouridine synthase A (Shigella boydii serotype 18 (strain CDC 3083-94 / BS512)).